Here is a 441-residue protein sequence, read N- to C-terminus: MSHEGEEELLDYSDSEEIALPSTTVESGSNGDAKAETTTVKEENTEQKGSYVGIHSTGFRDFLLKPELLRAIVDCGFEHPSEVQQVCIPQSILGTDVLCQAKAGVGKTAVFVLSTLQQLEPVPGECSVVVLCHTRELAYQIMNEYARFSKYLPDVKTAVFYGGSPIQKDIELIQNKETSPHVIVATPGRLHALVRDKHLRLGNVKTFVIDECDKVLDQIDMRRDVQEIFRVTPRQKQVMMFSATLSQEIRPICKKFMSSPLEILVDDEGKLTLHGLQQYYVDVEEKSKNRKLGDLLDNLEFNQVIIFVKSTSRANGLSQVLNANGFPCTAVHSGIPQEERIARYKEFKEFKKRICVSTDVFGRGIDIERINLAINYDLPAEADQYLHRVGRAGRFGTKGLAISFVSTPEDKEVLAKIQERFEVNIAPYPAEGVDPSTYMNS.

Residues 1–17 are compositionally biased toward acidic residues; the sequence is MSHEGEEELLDYSDSEE. The segment at 1-47 is disordered; that stretch reads MSHEGEEELLDYSDSEEIALPSTTVESGSNGDAKAETTTVKEENTEQ. The segment covering 21-30 has biased composition (polar residues); that stretch reads PSTTVESGSN. Residues 33 to 46 are compositionally biased toward basic and acidic residues; sequence AKAETTTVKEENTE. The Q motif signature appears at 57 to 85; it reads TGFRDFLLKPELLRAIVDCGFEHPSEVQQ. In terms of domain architecture, Helicase ATP-binding spans 88–263; the sequence is IPQSILGTDV…KKFMSSPLEI (176 aa). 101-108 lines the ATP pocket; the sequence is AKAGVGKT. The DECD box signature appears at 210–213; the sequence is DECD. The 162-residue stretch at 275–436 folds into the Helicase C-terminal domain; sequence GLQQYYVDVE…PYPAEGVDPS (162 aa).

The protein belongs to the DEAD box helicase family. DECD subfamily.

The protein resides in the nucleus. It carries out the reaction ATP + H2O = ADP + phosphate + H(+). Its function is as follows. ATP-binding RNA helicase involved in transcription elongation and required for the export of mRNA out of the nucleus. SUB2 also plays a role in pre-mRNA splicing and spliceosome assembly. May be involved in rDNA and telomeric silencing, and maintenance of genome integrity. The polypeptide is ATP-dependent RNA helicase SUB2 (SUB2) (Yarrowia lipolytica (strain CLIB 122 / E 150) (Yeast)).